The chain runs to 881 residues: Mechanosensitive ion channel protein 4 (881 aa).

Positions 35–245 (FWHNDKSSKP…EEEDPFSEED (211 aa)) are disordered. Basic and acidic residues predominate over residues 56 to 66 (FMRRSSEKSEE). 3 stretches are compositionally biased toward polar residues: residues 73–82 (LINQFLNKQK), 100–118 (QKNT…SASP), and 206–230 (TPRS…NQGG). The segment covering 234-245 (LEEEEDPFSEED) has biased composition (acidic residues). Helical transmembrane passes span 255–275 (ICVW…SLIC), 297–317 (VMVL…KLFV), 339–359 (KPVQ…FLFD), and 377–397 (VLIC…LVKV). Residues 457–501 (GPKAVSSPPQVTVGSGRLQKSPSRVGKSPVLSRSGSKKEGGEEGI) are disordered. Over residues 463–478 (SPPQVTVGSGRLQKSP) the composition is skewed to polar residues. A compositionally biased stretch (basic and acidic residues) spans 492 to 501 (SKKEGGEEGI). A run of 2 helical transmembrane segments spans residues 643–663 (IVDV…LGIA) and 678–698 (VVFV…FVFV).

This sequence belongs to the MscS (TC 1.A.23) family.

Its subcellular location is the membrane. Mechanosensitive channel that opens in response to stretch forces in the membrane lipid bilayer. In Arabidopsis thaliana (Mouse-ear cress), this protein is Mechanosensitive ion channel protein 4 (MSL4).